The following is a 201-amino-acid chain: Recombination protein RecR (201 aa).

Residues 57–72 form a C4-type zinc finger; the sequence is CADCRTFTEQEVCNIC. Residues 81–176 enclose the Toprim domain; the sequence is GQICVVESPA…EASRIAHGVP (96 aa).

The protein belongs to the RecR family.

Functionally, may play a role in DNA repair. It seems to be involved in an RecBC-independent recombinational process of DNA repair. It may act with RecF and RecO. This chain is Recombination protein RecR, found in Shigella boydii serotype 18 (strain CDC 3083-94 / BS512).